A 446-amino-acid chain; its full sequence is Probable inactive lipase MT1628 (446 aa).

It belongs to the AB hydrolase superfamily. Lipase family.

The protein is Probable inactive lipase MT1628 of Mycobacterium tuberculosis (strain CDC 1551 / Oshkosh).